We begin with the raw amino-acid sequence, 1774 residues long: MHSAATSTYPSGKTSPAPVGTPGTEYSEYEFSNDVAVVGMACRVAGGNHNPELLWQSLLSQKSAMGEIPPMRWEPYYRRDARNEKFLKNTTSRGYFLDRLEDFDCQFFGISPKEAEQMDPQQRVSLEVASEALEDAGIPAKSLSGSDTAVFWGVNSDDYSKLVLEDLPNVEAWMGIGTAYCGVPNRISYHLNLMGPSTAVDAACASSLVAIHHGVQAIRLGESKVAIVGGVNALCGPGLTRVLDKAGAISSDGSCKSFDDDAHGYARGEGAGALVLKSLHRALLDHDNVLAVIKGSAVCQDGKTNGIMAPNSVAQQLAANNALSAANIDPHTVRYVEAHATSTPLGDPTEISAIASVYGADRPADDPCYIGSIKPNIGHLEAGAGVMGFIKAVLAIQKGVLPPQANLTKLNSRIDWKTAGVKVVQEATPWPESDPIRRAGVCSYGYGGTVSHAVIEEFSPILQPDPLGNGAVSGPGLLLLSGPQEKRLALQAKTLRDWMTAEGKDHNLSDILTTLATRRDHHDYRAALVVDDYRDAEQVLQSLANGVDHTFTTQSRVLGSDISKDVVWVFSGHGAQWPDMGKQLIHNPVFFAAIQPLDELIQAEIGLSPIELLRTGDFESSDRVQILTYVMQIGLSALLQSNGITPQAVIGHSVGEIAASVVAGALSPAEGALIVTRRALLYRQVMGKGGMILVNLPSAETEEILGSRSDLVVAIDSSPSSCVVAGDKELVAETAEALKARGVKTFTVKSDIAFHSPTLNGLVDPLRDVLAETLSPVSPNVKLYSTALADPRGQDLRDVEYWAGNMVNRVRLTSAVKAAVEDGYRLFLEVSTHPVVSHSINETLMDAGMEDFAVIPTLLRKKPTEKHILHSIAQLHCRGAEVNWAAQMPGRWATGVPTTTWMHKPIWRKIETAPLHTGLTHDVEKHTLLGQRIPVPGTDTYVYTTRLDNDTKPFPGSHPLHGTEIVPAAGLINTFLKGTGGQMLQNVVLRVPVAINAPRSVQVVVQQDQVKVVSRLIPSEPSQLDDDASWVTHTTAYWDRKVAGSEDRIDFAAVKSRLVTKLADNFSIDYLDKVGVSAMGFPWAVTEHYRNDKEMLARVDVNPAISGDAPLPWDSSSWAPVLDAATSVGSTIFPTPALRMPAQIERVEVFTSQDPPKISWLYVQEASDSVPTSHVSVVSEAGEVLAKFTAMRFSEIEGTPGVSGSMESLVHQIAWPPATPAEEPLSIETVILVSPDATTRALYAASLPTRVNSFQFSSTQEFFSNASSLPLEKGTVVTYIPGEVASLAEVPAASESFTWNLLELIKFTVNGSLPIKVFTLTANIGEGQTPTALAQSPLYGLARVIASEHPDLGTLIDVEEPVIPLSTMRYIQGADIIRINDGIARTSRFRSLPRNKLLPASEGPRLLPRPEGTYLITGGLGVLGLEVADFLVEKGARRLLLISRRALPPRRTWDQVSEDLQPTIAKIRLLESRGASVHVLPLDITKPDAVEQLTTALDRLSLPSVQGVVHAAGVLDNELVMQTTRDAFNRVLAPKIAGALALHEVFPPKSVDFFVMFSSCGNLVGFTGQASYGSGNAFLDTLATHRARLGDAAVSFQWTSWRGLGMGASTDFINAELESKGITDVTRDEAFAAWQHLAKYDMDHGVVLRSRAFEDGEPIPVSILNDIAVRRVGTVSNTSPAAAGSSDAVPTSGPELKAYLDEKIRGCVAKVLQMTAEDVDSKAALADLGVDSVMTVTLRRQLQLTLKIAVPPTLTWSHPTVSHLAVWFAEKLAK.

Over residues 1–14 the composition is skewed to polar residues; it reads MHSAATSTYPSGKT. Positions 1-21 are disordered; the sequence is MHSAATSTYPSGKTSPAPVGT. The 426-residue stretch at 32–457 folds into the Ketosynthase family 3 (KS3) domain; sequence SNDVAVVGMA…GTVSHAVIEE (426 aa). Residues 186–238 form an acyltransferase region; sequence RISYHLNLMGPSTAVDAACASSLVAIHHGVQAIRLGESKVAIVGGVNALCGPG. Active-site for beta-ketoacyl synthase activity residues include Cys-204, His-339, and His-379. The segment at 642–676 is acetyl/malonyl transferases; it reads NGITPQAVIGHSVGEIAASVVAGALSPAEGALIVT. Residue Ser-653 is the For malonyltransferase activity of the active site. The N-terminal hotdog fold stretch occupies residues 926–1045; that stretch reads HTLLGQRIPV…AYWDRKVAGS (120 aa). Positions 926 to 1202 constitute a PKS/mFAS DH domain; the sequence is HTLLGQRIPV…FSEIEGTPGV (277 aa). His-958 acts as the Proton acceptor; for dehydratase activity in catalysis. The segment at 1059 to 1202 is C-terminal hotdog fold; that stretch reads VTKLADNFSI…FSEIEGTPGV (144 aa). Asp-1123 serves as the catalytic Proton donor; for dehydratase activity. Positions 1403–1450 are 2-oxoacyl reductase; the sequence is GPRLLPRPEGTYLITGGLGVLGLEVADFLVEKGARRLLLISRRALPPR. 1419 to 1424 provides a ligand contact to NADP(+); that stretch reads GLGVLG. Residues 1698 to 1772 form the Carrier domain; it reads AYLDEKIRGC…HLAVWFAEKL (75 aa). Ser-1732 is subject to O-(pantetheine 4'-phosphoryl)serine.

As to quaternary structure, homomultimer.

It carries out the reaction 3 malonyl-CoA + acetyl-CoA + NADPH + 3 H(+) = 6-methylsalicylate + 3 CO2 + NADP(+) + 4 CoA + H2O. It participates in mycotoxin biosynthesis; patulin biosynthesis. Functionally, this multifunctional enzyme is a polyketide synthase. It catalyzes a total of 11 steps by seven different component enzymes, in the biosynthesis of the antibiotic patulin. This chain is 6-methylsalicylic acid synthase, found in Penicillium patulum (Penicillium griseofulvum).